A 355-amino-acid chain; its full sequence is Protein HGH1 homolog (355 aa).

The segment at 324 to 355 (DEEGDPTPEEIEQMNKKQKLEDEDAQFETDEI) is disordered. 2 stretches are compositionally biased toward acidic residues: residues 325–335 (EEGDPTPEEIE) and 344–355 (EDEDAQFETDEI).

The protein belongs to the HGH1 family.

The chain is Protein HGH1 homolog from Dictyostelium discoideum (Social amoeba).